The following is a 221-amino-acid chain: N-acetyltransferase 8F1 (221 aa).

Residues 53 to 73 (LVLVSGSWLLAVVCIFFLLLL) traverse the membrane as a helical segment. The N-acetyltransferase domain maps to 69 to 219 (FLLLLLRFLA…RTIQLKYPFP (151 aa)).

The protein belongs to the camello family.

The protein resides in the membrane. In terms of biological role, may play a role in regulation of gastrulation. This Rattus norvegicus (Rat) protein is N-acetyltransferase 8F1.